Here is a 294-residue protein sequence, read N- to C-terminus: MKTKVIVVIGPTAVGKTALGIDLAQRYNGEIISGDSQQVYRKLDIGTAKASPEEQAAAVHHLIDVRDVTEGYSAYEFVAEAKALIADIKSRGKLPIIVGGTGLYIQSLLEGYHLGGLVDQEQVLAYRAELDCLSDEDLETMAEQAGLMVEGNSRRRIIRGLELKKFGENLENTESGYEPLYICLTDDRQVLYDRINQRVDKMMAAGLLDEVSWLYQEHPEAQAAMGIGYKEFFPYLEGQISLEEAIDNVKQNSRRFAKRQLTWFRNRMAVDFYQVSEEAVKDRIYTAVEEFLDD.

Residue 10–17 (GPTAVGKT) participates in ATP binding. Substrate is bound at residue 12-17 (TAVGKT). The segment at 35 to 38 (DSQQ) is interaction with substrate tRNA.

This sequence belongs to the IPP transferase family. Monomer. Mg(2+) serves as cofactor.

The enzyme catalyses adenosine(37) in tRNA + dimethylallyl diphosphate = N(6)-dimethylallyladenosine(37) in tRNA + diphosphate. Functionally, catalyzes the transfer of a dimethylallyl group onto the adenine at position 37 in tRNAs that read codons beginning with uridine, leading to the formation of N6-(dimethylallyl)adenosine (i(6)A). In Streptococcus suis (strain 05ZYH33), this protein is tRNA dimethylallyltransferase.